The following is a 664-amino-acid chain: DNA ligase (664 aa).

NAD(+)-binding positions include 32–36 (DKEYD) and 80–81 (SL). The active-site N6-AMP-lysine intermediate is the lysine 122. NAD(+) contacts are provided by arginine 144, glutamate 178, and lysine 314. 4 residues coordinate Zn(2+): cysteine 407, cysteine 410, cysteine 423, and cysteine 429. Residues 587–664 (IDENPFMDKT…NEEEFSNKIK (78 aa)) form the BRCT domain.

The protein belongs to the NAD-dependent DNA ligase family. LigA subfamily. The cofactor is Mg(2+). Mn(2+) is required as a cofactor.

The catalysed reaction is NAD(+) + (deoxyribonucleotide)n-3'-hydroxyl + 5'-phospho-(deoxyribonucleotide)m = (deoxyribonucleotide)n+m + AMP + beta-nicotinamide D-nucleotide.. DNA ligase that catalyzes the formation of phosphodiester linkages between 5'-phosphoryl and 3'-hydroxyl groups in double-stranded DNA using NAD as a coenzyme and as the energy source for the reaction. It is essential for DNA replication and repair of damaged DNA. This chain is DNA ligase, found in Clostridium botulinum (strain Langeland / NCTC 10281 / Type F).